The chain runs to 815 residues: MDNESHSQETESKILEGAKVATRRRRVTRACDMCRRKKIKCDGLRPCKNCKAGKLECTYHMPSSRKSSFSPEYVENLESRVRYLETLLKKNTNFDLSSNSPSFLFFLREQKFQATNELENMSPERKVIFTSMINYGNLFVDAKHGTRYFRGGSSIHVLIQHLIRRLPGDFEICEPYSAYPLGNKNIQFDDNDPEYQFFTPTPRFSIDFMVSSVDPREIQLPGIEEALCITKAAVSYVSGIVFYTTYADFPKKIRLLYSGNYQGNFFPLFLSILCVGYYHHLLNNPSNTELQSLIKKYSFYSERLVKSADNFTIESIQCLLILSIYRYCRTEISAAWYYMKLGLNCCLRLGLHRNITEGFTEEQIDSRRRIFWAIYCYDRQLCTLFGFPLGVRDEDIDQCLPVTPKFPSVTEIEANARLFFFHGVKLYKISSRILTKLYSPNSRNVTKKHISYAVIQDLEQLLDGFYNSLPRVFRAEQPGEFQANHFFYNLQLVYYSFRMLIYRPLLHYLEADSPAMQALKVPDRQTAFTLACKCVDSAIVCVQNLSHLSKGLKRTLDRYYWTTVYCGFSTIVTLIFAALLTKNTNLLIHISVARESIEALAHECVTRRLLPLIDKMRESLMKILESNADGYKQMSPTKAPQVFESESNVPINNGPQQSIDKESNSNTQLPQVETEGQQQSVFDGNIGTIPYQAYNMNEDSFIDINTLSSMLNYHTQAVSIHHPSFYISRSDVPLEEEFQIPNELLAVDPVAESMQENSDIINEAFGLVDPDVSDGKSRESSSLNNSTPFNPTVNIDPASILEHFSQNVMKDSQNS.

The segment at residues 31-57 is a DNA-binding region (zn(2)-C6 fungal-type); the sequence is CDMCRRKKIKCDGLRPCKNCKAGKLEC. A helical transmembrane segment spans residues 560–580; sequence YWTTVYCGFSTIVTLIFAALL. Disordered regions lie at residues 646–668 and 769–792; these read ESNV…SNTQ and DPDV…FNPT. A compositionally biased stretch (polar residues) spans 780–792; it reads SSSLNNSTPFNPT.

It localises to the cytoplasm. The protein resides in the nucleus membrane. This is an uncharacterized protein from Schizosaccharomyces pombe (strain 972 / ATCC 24843) (Fission yeast).